Reading from the N-terminus, the 162-residue chain is Endoribonuclease YbeY (162 aa).

Positions 118, 122, and 128 each coordinate Zn(2+).

This sequence belongs to the endoribonuclease YbeY family. It depends on Zn(2+) as a cofactor.

It localises to the cytoplasm. Its function is as follows. Single strand-specific metallo-endoribonuclease involved in late-stage 70S ribosome quality control and in maturation of the 3' terminus of the 16S rRNA. The sequence is that of Endoribonuclease YbeY from Caulobacter sp. (strain K31).